We begin with the raw amino-acid sequence, 4576 residues long: Mucin-2 (4576 aa).

The signal sequence occupies residues 1 to 20 (MGLPLARLVAACLVLALAKG). Phosphoserine is present on serine 21. Positions 32-205 (HVCSTWGDFH…KINKPEVQCE (174 aa)) constitute a VWFD 1 domain. Cystine bridges form between cysteine 34–cysteine 166, cysteine 56–cysteine 204, cysteine 64–cysteine 163, cysteine 216–cysteine 253, cysteine 223–cysteine 248, cysteine 235–cysteine 273, cysteine 255–cysteine 261, cysteine 263–cysteine 289, cysteine 293–cysteine 327, cysteine 306–cysteine 319, cysteine 310–cysteine 349, cysteine 329–cysteine 343, cysteine 351–cysteine 373, cysteine 368–cysteine 385, cysteine 371–cysteine 380, cysteine 389–cysteine 526, cysteine 411–cysteine 561, cysteine 433–cysteine 441, cysteine 572–cysteine 617, cysteine 586–cysteine 612, cysteine 599–cysteine 637, cysteine 619–cysteine 625, cysteine 627–cysteine 652, cysteine 659–cysteine 696, cysteine 672–cysteine 686, cysteine 676–cysteine 716, cysteine 698–cysteine 710, cysteine 718–cysteine 740, and cysteine 738–cysteine 747. Aspartate 46 provides a ligand contact to Ca(2+). The Cu(+) site is built by methionine 143 and methionine 151. Glutamate 153 contributes to the Cu(2+) binding site. The N-linked (GlcNAc...) asparagine glycan is linked to asparagine 160. Residues aspartate 168, asparagine 170, and glutamate 177 each coordinate Ca(2+). Histidine 275 contributes to the Cu(2+) binding site. Positions 293 to 349 (CPNNMVYLESSSPCVDTCSHLEVSSLCEEHYMDGCFCPEGTVYDDITGSGCIPVSQC) constitute a TIL domain. Residue histidine 322 coordinates Cu(2+). A Cu(+)-binding site is contributed by methionine 324. Positions 387-562 (ETCALEGGSH…NTWKAQSSCH (176 aa)) constitute a VWFD 2 domain. A Ca(2+)-binding site is contributed by aspartate 401. N-linked (GlcNAc...) asparagine glycosylation occurs at asparagine 421. Ca(2+) is bound by residues asparagine 528, asparagine 530, leucine 532, aspartate 535, and aspartate 536. A glycan (N-linked (GlcNAc...) asparagine) is linked at asparagine 668. Asparagine 768 is a glycosylation site (N-linked (GlcNAc...) asparagine). Cystine bridges form between cysteine 782–cysteine 818, cysteine 800–cysteine 812, cysteine 820–cysteine 843, cysteine 837–cysteine 855, cysteine 841–cysteine 850, cysteine 859–cysteine 990, cysteine 881–cysteine 1025, cysteine 890–cysteine 987, cysteine 907–cysteine 914, cysteine 1035–cysteine 1078, cysteine 1049–cysteine 1073, cysteine 1060–cysteine 1100, cysteine 1080–cysteine 1088, cysteine 1090–cysteine 1115, cysteine 1106–cysteine 1135, cysteine 1119–cysteine 1161, cysteine 1143–cysteine 1185, cysteine 1165–cysteine 1179, cysteine 1187–cysteine 1211, cysteine 1206–cysteine 1236, and cysteine 1209–cysteine 1219. An N-linked (GlcNAc...) asparagine glycan is attached at asparagine 838. The VWFD 3 domain maps to 857–1026 (STCSIYGSGH…NSWKEASTCP (170 aa)). Residue aspartate 871 participates in Ca(2+) binding. Asparagine 893 carries N-linked (GlcNAc...) asparagine glycosylation. Residues asparagine 992, aspartate 994, asparagine 999, and aspartate 1000 each coordinate Ca(2+). 2 N-linked (GlcNAc...) asparagine glycosylation sites follow: asparagine 1137 and asparagine 1152. N-linked (GlcNAc...) asparagine glycosylation is found at asparagine 1213, asparagine 1228, and asparagine 1244. O-linked (GalNAc) threonine glycosylation is found at threonine 1265, threonine 1268, threonine 1269, threonine 1281, and threonine 1292. Residues asparagine 1305, histidine 1308, glycine 1315, aspartate 1316, and glutamate 1318 each coordinate Ca(2+). Asparagine 1352 is a glycosylation site (N-linked (GlcNAc...) asparagine). Residues aspartate 1375 and tyrosine 1376 each contribute to the Ca(2+) site. Tandem repeats lie at residues 1395–1415 (SPTT…PTTL), 1416–1427 (PTSSPVTSSATL), 1428–1437 (PTTSSITSTI), 1438–1453 (SPTT…SPTT), and 1454–1460 (SPTTSPT). The segment at 1395-2866 (SPTTSTTTLS…PTTSSTFTTP (1472 aa)) is disordered. A 7B repeat occupies 1478–1497 (PSTTSPTTPSTTPSTTSPTT). The stretch at 1498 to 1510 (PSTTSPTTPTSTS) is one 8A repeat. One copy of the 9B repeat lies at 1530–1556 (SPTTSPTTPSTTSPTISTTTSTISPTT). Residues 1557-1572 (PSTTSPNTPSTTSSTI) form a 10A repeat. A 10B repeat occupies 1573–1588 (PSTTSPTTPSTTSPTI). An 11A repeat occupies 1589 to 1607 (STTTSTTSPTTPSTTSPTT). An 11B repeat occupies 1608–1634 (PSTTSPTTPSTTSPTISTTTLTTSPTT). A run of 2 repeats spans residues 1635–1642 (PSTTSPTT) and 1665–1681 (ISPT…LSTT). N-linked (GlcNAc...) asparagine glycosylation is found at asparagine 2529 and asparagine 2910. 2 stretches are compositionally biased toward low complexity: residues 2975–3623 (PSST…GSTP) and 3631–3706 (PGPT…TSPS). A disordered region spans residues 2975 to 3706 (PSSTTTETPT…SSTSPITSPS (732 aa)). N-linked (GlcNAc...) asparagine glycans are attached at residues asparagine 3734, asparagine 3745, and asparagine 3756. Pro residues predominate over residues 3764–3774 (STPTPSTPTPT). A disordered region spans residues 3764-3806 (STPTPSTPTPTPSQTTTPSTTSSKSTPSTPQSTSPKSTLSTPT). The span at 3775 to 3806 (PSQTTTPSTTSSKSTPSTPQSTSPKSTLSTPT) shows a compositional bias: low complexity. Asparagine 3823, asparagine 3830, and asparagine 3903 each carry an N-linked (GlcNAc...) asparagine glycan. The VWFD 4 domain occupies 3880–4063 (CYCTGWGDPH…VNDPSKPHCP (184 aa)). Intrachain disulfides connect cysteine 3882–cysteine 4023, cysteine 3904–cysteine 4062, and cysteine 3928–cysteine 3936. Asparagine 3991, asparagine 4017, asparagine 4028, asparagine 4083, asparagine 4149, asparagine 4183, asparagine 4254, asparagine 4277, asparagine 4351, asparagine 4366, asparagine 4434, asparagine 4465, and asparagine 4488 each carry an N-linked (GlcNAc...) asparagine glycan. VWFC domains lie at 4213-4282 (CVGP…TSCK) and 4320-4387 (GVCV…KKCQ). Intrachain disulfides connect cysteine 4471–cysteine 4518, cysteine 4485–cysteine 4532, cysteine 4494–cysteine 4548, and cysteine 4498–cysteine 4550. Residues 4471–4556 (CSAVSVMKEI…SCLCQDTVCG (86 aa)) form the CTCK domain.

As to quaternary structure, homomultimer; disulfide-linked. The N- and C-terminus mediate their assembly into higher order structures to form filaments. The CTCK domains of two polypeptides associate in the endoplasmic reticulum to generate intermolecularly disulfide-bonded dimers. These dimers progress to the Golgi apparatus, which is a more acidic environment than the endoplasmic reticulum. Under acidic conditions, the N-termini form non-covalent intermolecular interactions that juxtapose assemblies of the third VWD domain (VWD3) from different CTCK-linked dimers. The VWD3 assemblies then become disulfide bonded to one another to produce long, disulfide-linked polymers that remain highly compact until secretion. Interacts with FCGBP. Interacts with AGR2; disulfide-linked. O-glycosylated. O-glycosylation is required for mucin assembly. Goblet cells synthesize two forms of mucin that differ in branched chain O-glycosylation and the site of production in the colon. In terms of processing, may undergo proteolytic cleavage in the outer mucus layer of the colon, contributing to the expanded volume and loose nature of this layer which allows for bacterial colonization in contrast to the inner mucus layer which is dense and devoid of bacteria. Post-translationally, at low pH of 6 and under, undergoes autocatalytic cleavage in vitro in the N-terminal region of the fourth VWD domain. It is likely that this also occurs in vivo and is triggered by the low pH of the late secretory pathway. Highly expressed in goblet cells of the colon with lower levels in the small intestine and no expression in the stomach (at protein level).

It localises to the secreted. Its function is as follows. Coats the epithelia of the intestines and other mucus membrane-containing organs to provide a protective, lubricating barrier against particles and infectious agents at mucosal surfaces. Major constituent of the colon mucus, which is mainly formed by large polymeric networks of MUC2 secreted by goblet cells that cover the exposed surfaces of intestine. MUC2 networks form hydrogels that guard the underlying epithelium from pathogens and other hazardous matter entering from the outside world, while permitting nutrient absorption and gas exchange. Acts as a divalent copper chaperone that protects intestinal cells from copper toxicity and facilitates nutritional copper unptake into cells. Binds both Cu(2+) and its reduced form, Cu(1+), at two juxtaposed binding sites: Cu(2+), once reduced to Cu(1+) by vitamin C (ascorbate) or other dietary antioxidants, transits to the other binding site. MUC2-bound Cu(1+) is protected from oxidation in aerobic environments, and can be released for nutritional delivery to cells. Mucin gels store antimicrobial molecules that participate in innate immunity. Mucin glycoproteins also house and feed the microbiome, lubricate tissue surfaces, and may facilitate the removal of contaminants and waste products from the body. Goblet cells synthesize two forms of MUC2 mucin that differ in branched chain O-glycosylation and the site of production in the colon: a (1) 'thick' mucus that wraps the microbiota to form fecal pellets is produced in the proximal, ascending colon. 'Thick' mucus transits along the descending colon and is lubricated by a (2) 'thin' MUC2 mucus produced in the distal colon which adheres to the 'thick' mucus. This Mus musculus (Mouse) protein is Mucin-2.